We begin with the raw amino-acid sequence, 393 residues long: S-adenosylmethionine synthase (393 aa).

His16 is an ATP binding site. Asp18 is a binding site for Mg(2+). Glu44 is a K(+) binding site. Positions 57 and 100 each coordinate L-methionine. The segment at 100-110 is flexible loop; that stretch reads QSNDIAQGVDH. ATP is bound by residues 167 to 169, 238 to 239, Asp247, 253 to 254, Ala270, and Lys274; these read DAK, RF, and RK. Residue Asp247 participates in L-methionine binding. Lys278 is an L-methionine binding site.

It belongs to the AdoMet synthase family. In terms of assembly, homotetramer; dimer of dimers. The cofactor is Mg(2+). Requires K(+) as cofactor.

Its subcellular location is the cytoplasm. The catalysed reaction is L-methionine + ATP + H2O = S-adenosyl-L-methionine + phosphate + diphosphate. The protein operates within amino-acid biosynthesis; S-adenosyl-L-methionine biosynthesis; S-adenosyl-L-methionine from L-methionine: step 1/1. Catalyzes the formation of S-adenosylmethionine (AdoMet) from methionine and ATP. The overall synthetic reaction is composed of two sequential steps, AdoMet formation and the subsequent tripolyphosphate hydrolysis which occurs prior to release of AdoMet from the enzyme. This chain is S-adenosylmethionine synthase, found in Acidovorax sp. (strain JS42).